A 283-amino-acid chain; its full sequence is Elongation factor Ts (283 aa).

Positions 84-87 are involved in Mg(2+) ion dislocation from EF-Tu; it reads TDFV.

The protein belongs to the EF-Ts family.

It localises to the cytoplasm. Associates with the EF-Tu.GDP complex and induces the exchange of GDP to GTP. It remains bound to the aminoacyl-tRNA.EF-Tu.GTP complex up to the GTP hydrolysis stage on the ribosome. The chain is Elongation factor Ts from Bifidobacterium longum subsp. infantis (strain ATCC 15697 / DSM 20088 / JCM 1222 / NCTC 11817 / S12).